We begin with the raw amino-acid sequence, 166 residues long: Protein-export protein SecB (166 aa).

It belongs to the SecB family. In terms of assembly, homotetramer, a dimer of dimers. One homotetramer interacts with 1 SecA dimer.

It localises to the cytoplasm. One of the proteins required for the normal export of preproteins out of the cell cytoplasm. It is a molecular chaperone that binds to a subset of precursor proteins, maintaining them in a translocation-competent state. It also specifically binds to its receptor SecA. The protein is Protein-export protein SecB of Cereibacter sphaeroides (strain ATCC 17029 / ATH 2.4.9) (Rhodobacter sphaeroides).